Here is a 473-residue protein sequence, read N- to C-terminus: Biotin-dependent acetyl-/propionyl-coenzyme A carboxylase beta6 subunit (473 aa).

The CoA carboxyltransferase N-terminal domain maps to 1–224 (MTIMAPEAVG…QGHFDRSKAE (224 aa)). The region spanning 225 to 473 (AGDTDIHALL…RRGRHKNIPL (249 aa)) is the CoA carboxyltransferase C-terminal domain.

The protein belongs to the AccD/PCCB family. The biotin-dependent acyl-CoA carboxylase complex is composed of AccA3, which contains the biotin carboxylase (BC) and biotin carboxyl carrier protein (BCCP) domains, and AccD6, which contains the carboxyl transferase (CT) domain.

The catalysed reaction is N(6)-carboxybiotinyl-L-lysyl-[protein] + acetyl-CoA = N(6)-biotinyl-L-lysyl-[protein] + malonyl-CoA. It carries out the reaction N(6)-carboxybiotinyl-L-lysyl-[protein] + propanoyl-CoA = methylmalonyl-CoA + N(6)-biotinyl-L-lysyl-[protein]. Its pathway is lipid metabolism; fatty acid biosynthesis. It functions in the pathway lipid metabolism; mycolic acid biosynthesis. Functionally, component of a biotin-dependent acyl-CoA carboxylase complex. This subunit transfers the CO2 from carboxybiotin to the CoA ester substrate. When associated with the alpha3 subunit AccA3, is involved in the carboxylation of acetyl-CoA and propionyl-CoA. The polypeptide is Biotin-dependent acetyl-/propionyl-coenzyme A carboxylase beta6 subunit (accD6) (Mycobacterium bovis (strain ATCC BAA-935 / AF2122/97)).